The sequence spans 509 residues: Monocarboxylate transporter 9 (509 aa).

At 1–12 (MELKKSPDGGWG) the chain is on the cytoplasmic side. Helical transmembrane passes span 13-33 (WVIV…PLAV), 53-73 (WVGS…SLCV), 80-100 (PVTI…SFAP), 102-122 (IYFL…LLYT), 137-157 (GLAL…YAAL), 164-184 (FYGL…ILAC), 305-325 (VFSA…PPSL), 342-362 (IMPL…LLGI), 372-392 (LYLY…IPFA), 398-418 (LALL…FPYV), 433-453 (GILM…VGWF), and 462-482 (IAFY…LLAA). The Cytoplasmic portion of the chain corresponds to 483–509 (LPSWDTCNKQLPKPAPTTFLYKVASNV).

Belongs to the major facilitator superfamily. Monocarboxylate porter (TC 2.A.1.13) family.

The protein localises to the cell membrane. It catalyses the reaction creatine(in) = creatine(out). The catalysed reaction is (R)-carnitine(in) = (R)-carnitine(out). In terms of biological role, extracellular pH-and Na(+)-sensitive low-affinity creatine transporter. Also functions as a pH-independent carnitine efflux transporter. This chain is Monocarboxylate transporter 9 (SLC16A9), found in Pongo abelii (Sumatran orangutan).